Consider the following 419-residue polypeptide: Fumarylacetoacetase (419 aa).

Serine 2 carries the N-acetylserine modification. 2 positions are modified to phosphoserine: serine 84 and serine 92. Aspartate 126 lines the Ca(2+) pocket. Residue tyrosine 128 coordinates substrate. The Proton acceptor role is filled by histidine 133. Position 142 (arginine 142) interacts with substrate. Ca(2+) is bound by residues glutamate 199, glutamate 201, and aspartate 233. Aspartate 233 contributes to the Mg(2+) binding site. The substrate site is built by glutamine 240 and tyrosine 244. Mg(2+) contacts are provided by lysine 253 and threonine 257. Serine 309 carries the phosphoserine modification. Threonine 350 is a substrate binding site. A Phosphoserine modification is found at serine 417.

Belongs to the FAH family. In terms of assembly, homodimer. Requires Ca(2+) as cofactor. It depends on Mg(2+) as a cofactor. As to expression, mainly in liver and kidney.

The enzyme catalyses 4-fumarylacetoacetate + H2O = acetoacetate + fumarate + H(+). Its pathway is amino-acid degradation; L-phenylalanine degradation; acetoacetate and fumarate from L-phenylalanine: step 6/6. The sequence is that of Fumarylacetoacetase (Fah) from Rattus norvegicus (Rat).